Here is a 397-residue protein sequence, read N- to C-terminus: MVKETTYYDVLGVKPNATQEELKKAYRKLALKYHPDKNPNEGEKFKQISQAYEVLSDAKKRELYDKGGEQAIKEGGAGGGFGSPMDIFDMFFGGGGRMQRERRGKNVVHQLTVTLEDLYNGATRKLALQKNVICDKCEGRGGKKGAVECCPNCRGTGMQIRIHQIGPGMVQQIQSVCMECQGHGERISPKDRCKSCNGRKIVREKKILEVHIDKGMKDGQKITFHGEGDQEPGLEPGDIIIVLDQKDHAVFTRRGEDLFMCMDIQLVEALCGFQKPISTLDNRTIVITSHPGQIVKHGDIKCVLNEGMPIYRRPYEKGRLIIEFKVNFPENGFLSPDKLSLLEKLLPERKEVEETDEMDQVELVDFDPNQERRRHYNGEAYEDDEHHPRGGVQCQTS.

Positions 6–68 constitute a J domain; sequence TYYDVLGVKP…KKRELYDKGG (63 aa). At Lys-66 the chain carries N6-acetyllysine. Ser-83 is subject to Phosphoserine. The CR-type zinc finger occupies 121–205; sequence GATRKLALQK…CNGRKIVREK (85 aa). The Zn(2+) site is built by Cys-134, Cys-137, Cys-150, Cys-153, Cys-177, Cys-180, Cys-193, and Cys-196. 4 CXXCXGXG motif repeats span residues 134–141, 150–157, 177–184, and 193–200; these read CDKCEGRG, CPNCRGTG, CMECQGHG, and CKSCNGRK. At Ser-335 the chain carries Phosphoserine. Residues 352–397 form a disordered region; that stretch reads VEETDEMDQVELVDFDPNQERRRHYNGEAYEDDEHHPRGGVQCQTS. Over residues 353-365 the composition is skewed to acidic residues; that stretch reads EETDEMDQVELVD. The residue at position 381 (Tyr-381) is a Phosphotyrosine. A Cysteine methyl ester modification is found at Cys-394. The S-farnesyl cysteine moiety is linked to residue Cys-394. Positions 395 to 397 are cleaved as a propeptide — removed in mature form; the sequence is QTS.

As to quaternary structure, identified in a complex with HSPA1B and BAX. Interacts with RNF207.

Its subcellular location is the membrane. It localises to the cytoplasm. The protein localises to the microsome. It is found in the mitochondrion. The protein resides in the nucleus. Its subcellular location is the perinuclear region. Co-chaperone for HSPA8/Hsc70. Plays a role in protein transport into mitochondria via its role as co-chaperone. Functions as co-chaperone for HSPA1B and negatively regulates the translocation of BAX from the cytosol to mitochondria in response to cellular stress, thereby protecting cells against apoptosis. Stimulates ATP hydrolysis, but not the folding of unfolded proteins mediated by HSPA1A (in vitro). Promotes apoptosis in response to cellular stress mediated by exposure to anisomycin or UV. In Bos taurus (Bovine), this protein is DnaJ homolog subfamily A member 1 (DNAJA1).